The chain runs to 389 residues: Pyruvate dehydrogenase E1 component subunit alpha, somatic form, mitochondrial (389 aa).

A mitochondrion-targeting transit peptide spans Gly-1–Thr-28. Residue Lys-62 is modified to N6-acetyllysine; alternate. Lys-62 bears the N6-succinyllysine; alternate mark. The pyruvate site is built by His-91, Tyr-117, Arg-118, Ala-156, Gly-164, Val-166, Asp-195, Gly-196, Ala-197, Asn-224, and Tyr-226. Residues Tyr-117 and Arg-118 each contribute to the thiamine diphosphate site. Thiamine diphosphate is bound by residues Gly-164, Val-166, Asp-195, Gly-196, Ala-197, and Asn-224. Position 195 (Asp-195) interacts with Mg(2+). 2 residues coordinate Mg(2+): Asn-224 and Tyr-226. Phosphoserine; by PDK1 is present on Ser-231. Position 243 is an N6-acetyllysine; alternate (Lys-243). Residue Lys-243 is modified to N6-succinyllysine; alternate. At Lys-276 the chain carries N6-succinyllysine. His-291 is a thiamine diphosphate binding site. The residue at position 292 (Ser-292) is a Phosphoserine; by PDK1, PDK2, PDK3 and PDK4. Position 294 is a phosphoserine (Ser-294). Position 299 is a phosphoserine; by PDK1, PDK2, PDK3 and PDK4 (Ser-299). Tyr-300 carries the phosphotyrosine modification. Lys-312 is modified (N6-acetyllysine; alternate). At Lys-312 the chain carries N6-succinyllysine; alternate. N6-acetyllysine occurs at positions 320 and 335. Lys-384 is subject to N6-succinyllysine.

In terms of assembly, heterotetramer of two PDHA1 and two PDHB subunits. The heterotetramer interacts with DLAT, and is part of the multimeric pyruvate dehydrogenase complex that contains multiple copies of pyruvate dehydrogenase (E1), dihydrolipoamide acetyltransferase (DLAT, E2) and lipoamide dehydrogenase (DLD, E3). These subunits are bound to an inner core composed of about 48 DLAT and 12 PDHX molecules. Thiamine diphosphate serves as cofactor. The cofactor is Mg(2+). In terms of processing, phosphorylation at Ser-231, Ser-292 and Ser-299 by PDK family kinases inactivates the enzyme; for this phosphorylation at a single site is sufficient. Phosphorylation at Ser-292 interferes with access to active site, and thereby inactivates the enzyme. Dephosphorylation at all three sites, i.e. at Ser-231, Ser-292 and Ser-299, is required for reactivation. Acetylation alters the phosphorylation pattern. Deacetylated by SIRT3.

Its subcellular location is the mitochondrion matrix. The enzyme catalyses N(6)-[(R)-lipoyl]-L-lysyl-[protein] + pyruvate + H(+) = N(6)-[(R)-S(8)-acetyldihydrolipoyl]-L-lysyl-[protein] + CO2. Its activity is regulated as follows. Pyruvate dehydrogenase activity is inhibited by phosphorylation of PDHA1; it is reactivated by dephosphorylation. In terms of biological role, the pyruvate dehydrogenase complex catalyzes the overall conversion of pyruvate to acetyl-CoA and CO(2), and thereby links the glycolytic pathway to the tricarboxylic cycle. The chain is Pyruvate dehydrogenase E1 component subunit alpha, somatic form, mitochondrial (PDHA1) from Sus scrofa (Pig).